Reading from the N-terminus, the 357-residue chain is GTPase Obg (357 aa).

Positions 1 to 159 constitute an Obg domain; that stretch reads MKFVDEAEIQ…RTLKLELKLL (159 aa). One can recognise an OBG-type G domain in the interval 160-343; that stretch reads ADIGMLGFPN…IMKSAMTLFE (184 aa). GTP is bound by residues 166–173, 191–195, 213–216, 293–296, and 324–326; these read GFPNVGKS, FTTLY, DVPG, NKAD, and SAV. Mg(2+) is bound by residues Ser-173 and Thr-193.

This sequence belongs to the TRAFAC class OBG-HflX-like GTPase superfamily. OBG GTPase family. In terms of assembly, monomer. Mg(2+) is required as a cofactor.

The protein resides in the cytoplasm. In terms of biological role, an essential GTPase which binds GTP, GDP and possibly (p)ppGpp with moderate affinity, with high nucleotide exchange rates and a fairly low GTP hydrolysis rate. Plays a role in control of the cell cycle, stress response, ribosome biogenesis and in those bacteria that undergo differentiation, in morphogenesis control. The polypeptide is GTPase Obg (Xylella fastidiosa (strain M12)).